A 1728-amino-acid chain; its full sequence is Nebulin-related-anchoring protein (1728 aa).

The LIM zinc-binding domain occupies 4–64; that stretch reads QACSRCGYGV…HAHNPKNNTF (61 aa). 41 Nebulin repeats span residues 173 to 200, 201 to 235, 244 to 271, 313 to 340, 345 to 379, 386 to 414, 416 to 450, 484 to 518, 519 to 553, 555 to 589, 599 to 623, 624 to 658, 659 to 689, 699 to 721, 723 to 757, 758 to 792, 794 to 828, 841 to 866, 867 to 893, 898 to 932, 943 to 960, 966 to 1000, 1001 to 1035, 1037 to 1071, 1075 to 1109, 1110 to 1136, 1141 to 1175, 1180 to 1203, 1209 to 1243, 1244 to 1278, 1280 to 1314, 1318 to 1352, 1353 to 1379, 1384 to 1418, 1425 to 1446, 1452 to 1478, 1487 to 1521, 1523 to 1557, 1561 to 1595, 1596 to 1630, and 1637 to 1661; these read TPAY…ERVS, TFTP…QQRG, TPAY…REMK, TPAY…KMKG, HSLA…NSKG, ETPQ…TQLR, HYDG…HDVV, KFSS…RNKL, NYTL…KTKG, GFEM…KMKG, LLHS…ESKT, HFNL…DYTV, LPED…WMRG, NLEQ…RVDE, KFTS…QSVH, QYTI…KQKA, GFEL…RSRG, QMSH…DTRS, QCHI…VGYR, CFTA…WMKG, VEQA…KYRQ, KFTS…NVKH, HYTQ…RLRD, GYKL…RMKG, GSRS…HAKA, HFHL…QDYR, QHTV…FMRG, VPGT…KYRQ, KYTA…DARH, QYTM…NLRA, GYKL…KERG, GVRN…SSQA, QCHL…HDYR, EFTA…GMKG, QSPQ…KYRK, KFTT…RLYR, RYTP…QSRA, GYDF…RDRG, GYRS…KGRS, QFHS…QHTS, and LKHA…LTRG. Threonine 203 carries the post-translational modification Phosphothreonine. Serine 1078 is subject to Phosphoserine.

As to quaternary structure, interacts with actin, alpha-actinin, KLHL41, TLN1 and VCL. Interacts with CSRP3. As to expression, expressed in cardiac and skeletal muscle. Not detected in kidney, spleen, liver, brain, lung, stomach or uterus.

May be involved in anchoring the terminal actin filaments in the myofibril to the membrane and in transmitting tension from the myofibrils to the extracellular matrix. This chain is Nebulin-related-anchoring protein, found in Mus musculus (Mouse).